The chain runs to 181 residues: Cytochrome b6-f complex iron-sulfur subunit (181 aa).

A disordered region spans residues 1–35; it reads MAQTGNFKSPARMSSLGQGAAPASSGAVTGGKPRE. The next 2 helical transmembrane spans lie at 53 to 73 and 114 to 134; these read VGGVGAVVAVSTLYPVVKYII and GGALTAVSAVCTHLGCLVNWV. One can recognise a Rieske domain in the interval 85–178; it reads LTVGKASEVP…ARIEGDSIII (94 aa). 4 residues coordinate [2Fe-2S] cluster: cysteine 124, histidine 126, cysteine 142, and histidine 145. Cysteines 129 and 144 form a disulfide.

Belongs to the Rieske iron-sulfur protein family. [2Fe-2S] cluster is required as a cofactor.

It localises to the cell inner membrane. The enzyme catalyses 2 oxidized [plastocyanin] + a plastoquinol + 2 H(+)(in) = 2 reduced [plastocyanin] + a plastoquinone + 4 H(+)(out). Functionally, component of the green S-bacteria bc-complex which consists of the Rieske protein and cytochrome b subunit and which appears to lack a cytochrome c1-equivalent. This complex has a comparatively low redox potential. This is Cytochrome b6-f complex iron-sulfur subunit (petC) from Chlorobaculum thiosulfatiphilum (Chlorobium limicola f.sp. thiosulfatophilum).